Here is a 430-residue protein sequence, read N- to C-terminus: MKQALRVAFGFLMLWAAMLHAEVRIVIDGGVDSGRPIGVVPFKWAGPGAAPEDIGGIVSDDLRYSGKFNPLDRARLPQQPASAQEVQPAAWSALAIDAVVVGQVTPNPDGSYNVTYQLVDTGGAPGTVLAQNSFKVNKQWLRYAAHTVSDEVFEKLTGIKGAFRTRLAYVVQTNGGQFPYELRVSDYDGYNPFVVHRSPQPLMSPAWSPDGSKLAYVTFESGRSELVIQTLANGAIRKVASFPRHNGAPAFSPDGSKLAFALSKTGSLNLYVMDLASGQIRQITDGRSNNTEPTWFPDSQNLAFTSDQAGRPQVYKVNINGGAPQRITWEGTQNQDADVSSDGKFMVMVSSDGGKQHIAKQDLVTGGVQVLSSTFLDETPSLAPNGTMVIYSSSQGMGSVLNLVSTDGRFKARLPATDGQVKFPAWSPYL.

The N-terminal stretch at Met1–Ala21 is a signal peptide.

Belongs to the TolB family. As to quaternary structure, the Tol-Pal system is composed of five core proteins: the inner membrane proteins TolA, TolQ and TolR, the periplasmic protein TolB and the outer membrane protein Pal. They form a network linking the inner and outer membranes and the peptidoglycan layer.

It localises to the periplasm. Part of the Tol-Pal system, which plays a role in outer membrane invagination during cell division and is important for maintaining outer membrane integrity. TolB occupies a key intermediary position in the Tol-Pal system because it communicates directly with both membrane-embedded components, Pal in the outer membrane and TolA in the inner membrane. This is Tol-Pal system protein TolB from Escherichia fergusonii (strain ATCC 35469 / DSM 13698 / CCUG 18766 / IAM 14443 / JCM 21226 / LMG 7866 / NBRC 102419 / NCTC 12128 / CDC 0568-73).